An 891-amino-acid polypeptide reads, in one-letter code: Shieldin complex subunit 2 (891 aa).

A sufficient for interaction with SHLD3 and MAD2L2 region spans residues 1–61 (MSQGSQVHIF…AGDQEFKNLE (61 aa)). The segment at 1 to 542 (MSQGSQVHIF…TYVSTKHSYL (542 aa)) is interaction with ASTE1. Disordered stretches follow at residues 184 to 222 (MSTG…KASD), 260 to 294 (NMEA…NEQS), and 333 to 357 (NEEN…WSCK). The span at 192-222 (PTGHRERQSQESFSDTRCEPQSEGAVRKASD) shows a compositional bias: basic and acidic residues. Composition is skewed to polar residues over residues 260 to 271 (NMEAEPTGSQGV) and 342 to 354 (LCSS…NRSW). The mediates interaction with SHLD1 stretch occupies residues 695–866 (KYSGVVLIKA…QQDFSLLDFC (172 aa)).

Belongs to the SHLD2 family. In terms of assembly, component of the shieldin complex, consisting of SHLD1, SHLD2, SHLD3 and MAD2L2/REV7. Within the complex, SHLD2 forms a scaffold which interacts with a SHLD3-MAD2L2 subcomplex via its N-terminus, and with SHLD1 via its C-terminus. Interacts with TP53BP1. Interacts with RIF1. Interacts with ASTE1.

It localises to the chromosome. Its function is as follows. Component of the shieldin complex, which plays an important role in repair of DNA double-stranded breaks (DSBs). During G1 and S phase of the cell cycle, the complex functions downstream of TP53BP1 to promote non-homologous end joining (NHEJ) and suppress DNA end resection. Mediates various NHEJ-dependent processes including immunoglobulin class-switch recombination, and fusion of unprotected telomeres. This is Shieldin complex subunit 2 from Mus musculus (Mouse).